A 119-amino-acid polypeptide reads, in one-letter code: Protein TusC (119 aa).

The protein belongs to the DsrF/TusC family. In terms of assembly, heterohexamer, formed by a dimer of trimers. The hexameric TusBCD complex contains 2 copies each of TusB, TusC and TusD. The TusBCD complex interacts with TusE.

Its subcellular location is the cytoplasm. In terms of biological role, part of a sulfur-relay system required for 2-thiolation of 5-methylaminomethyl-2-thiouridine (mnm(5)s(2)U) at tRNA wobble positions. The sequence is that of Protein TusC from Serratia proteamaculans (strain 568).